Here is a 304-residue protein sequence, read N- to C-terminus: tRNA-uridine aminocarboxypropyltransferase 1 (304 aa).

The residue at position 2 (serine 2) is an N-acetylserine. The DXTW signature appears at 206 to 209; the sequence is DSTW.

The protein belongs to the TDD superfamily. DTWD1 family.

Its subcellular location is the nucleus. It carries out the reaction a uridine in tRNA + S-adenosyl-L-methionine = a 3-[(3S)-3-amino-3-carboxypropyl]uridine in tRNA + S-methyl-5'-thioadenosine + H(+). Functionally, catalyzes the formation of 3-(3-amino-3-carboxypropyl)uridine (acp3U) at position 20 in the D-loop of several cytoplasmic tRNAs (acp3U(20)). The protein is tRNA-uridine aminocarboxypropyltransferase 1 of Pongo abelii (Sumatran orangutan).